Reading from the N-terminus, the 487-residue chain is Adenosylhomocysteinase (487 aa).

Substrate contacts are provided by threonine 76, aspartate 151, and glutamate 212. NAD(+) is bound at residue 213–215; it reads TTT. Substrate contacts are provided by lysine 242 and aspartate 246. NAD(+) is bound by residues asparagine 247, 276-281, glutamate 299, asparagine 334, 355-357, and asparagine 403; these read GYGDVG and IGH.

This sequence belongs to the adenosylhomocysteinase family. NAD(+) is required as a cofactor.

Its subcellular location is the cytoplasm. It carries out the reaction S-adenosyl-L-homocysteine + H2O = L-homocysteine + adenosine. It participates in amino-acid biosynthesis; L-homocysteine biosynthesis; L-homocysteine from S-adenosyl-L-homocysteine: step 1/1. May play a key role in the regulation of the intracellular concentration of adenosylhomocysteine. This is Adenosylhomocysteinase from Bacteroides fragilis (strain YCH46).